The chain runs to 237 residues: Uridylate kinase (237 aa).

12–15 (KLSG) contacts ATP. Residues 20-25 (GENGFG) form an involved in allosteric activation by GTP region. Position 54 (G54) interacts with UMP. ATP is bound by residues G55 and R59. Residues D72 and 133-140 (TGNPYFST) contribute to the UMP site. ATP contacts are provided by Y166 and D169.

Belongs to the UMP kinase family. As to quaternary structure, homohexamer.

It localises to the cytoplasm. It catalyses the reaction UMP + ATP = UDP + ADP. It participates in pyrimidine metabolism; CTP biosynthesis via de novo pathway; UDP from UMP (UMPK route): step 1/1. Its activity is regulated as follows. Allosterically activated by GTP. Inhibited by UTP. Its function is as follows. Catalyzes the reversible phosphorylation of UMP to UDP. In Clostridium perfringens (strain SM101 / Type A), this protein is Uridylate kinase.